Consider the following 314-residue polypeptide: 4-hydroxy-3-methylbut-2-enyl diphosphate reductase (314 aa).

Residue cysteine 12 participates in [4Fe-4S] cluster binding. The (2E)-4-hydroxy-3-methylbut-2-enyl diphosphate site is built by histidine 41 and histidine 74. Residues histidine 41 and histidine 74 each contribute to the dimethylallyl diphosphate site. Isopentenyl diphosphate is bound by residues histidine 41 and histidine 74. Cysteine 96 contacts [4Fe-4S] cluster. Residue histidine 124 participates in (2E)-4-hydroxy-3-methylbut-2-enyl diphosphate binding. Position 124 (histidine 124) interacts with dimethylallyl diphosphate. Histidine 124 serves as a coordination point for isopentenyl diphosphate. Glutamate 126 functions as the Proton donor in the catalytic mechanism. Threonine 167 provides a ligand contact to (2E)-4-hydroxy-3-methylbut-2-enyl diphosphate. Position 197 (cysteine 197) interacts with [4Fe-4S] cluster. (2E)-4-hydroxy-3-methylbut-2-enyl diphosphate contacts are provided by serine 225, serine 226, asparagine 227, and serine 269. The dimethylallyl diphosphate site is built by serine 225, serine 226, asparagine 227, and serine 269. Residues serine 225, serine 226, asparagine 227, and serine 269 each contribute to the isopentenyl diphosphate site.

It belongs to the IspH family. [4Fe-4S] cluster serves as cofactor.

It carries out the reaction isopentenyl diphosphate + 2 oxidized [2Fe-2S]-[ferredoxin] + H2O = (2E)-4-hydroxy-3-methylbut-2-enyl diphosphate + 2 reduced [2Fe-2S]-[ferredoxin] + 2 H(+). It catalyses the reaction dimethylallyl diphosphate + 2 oxidized [2Fe-2S]-[ferredoxin] + H2O = (2E)-4-hydroxy-3-methylbut-2-enyl diphosphate + 2 reduced [2Fe-2S]-[ferredoxin] + 2 H(+). It functions in the pathway isoprenoid biosynthesis; dimethylallyl diphosphate biosynthesis; dimethylallyl diphosphate from (2E)-4-hydroxy-3-methylbutenyl diphosphate: step 1/1. Its pathway is isoprenoid biosynthesis; isopentenyl diphosphate biosynthesis via DXP pathway; isopentenyl diphosphate from 1-deoxy-D-xylulose 5-phosphate: step 6/6. In terms of biological role, catalyzes the conversion of 1-hydroxy-2-methyl-2-(E)-butenyl 4-diphosphate (HMBPP) into a mixture of isopentenyl diphosphate (IPP) and dimethylallyl diphosphate (DMAPP). Acts in the terminal step of the DOXP/MEP pathway for isoprenoid precursor biosynthesis. This chain is 4-hydroxy-3-methylbut-2-enyl diphosphate reductase, found in Glaesserella parasuis serovar 5 (strain SH0165) (Haemophilus parasuis).